We begin with the raw amino-acid sequence, 526 residues long: Peptide chain release factor 3 (526 aa).

In terms of domain architecture, tr-type G spans 11–277 (SKRRTFAIIS…SLIKWAPSPL (267 aa)). GTP is bound by residues 20–27 (SHPDAGKT), 88–92 (DTPGH), and 142–145 (NKLD).

Belongs to the TRAFAC class translation factor GTPase superfamily. Classic translation factor GTPase family. PrfC subfamily.

It localises to the cytoplasm. Its function is as follows. Increases the formation of ribosomal termination complexes and stimulates activities of RF-1 and RF-2. It binds guanine nucleotides and has strong preference for UGA stop codons. It may interact directly with the ribosome. The stimulation of RF-1 and RF-2 is significantly reduced by GTP and GDP, but not by GMP. The polypeptide is Peptide chain release factor 3 (Buchnera aphidicola subsp. Acyrthosiphon pisum (strain Tuc7)).